The chain runs to 744 residues: Cullin-3 (744 aa).

A Cullin neddylation domain is found at 677 to 736 (MELSAIIVRIMKTEGKLSHQQLLERTTKRTQSRLSLTPSILKRSIQLLIEKEYIQRNADD). Lys-688 is covalently cross-linked (Glycyl lysine isopeptide (Lys-Gly) (interchain with G-Cter in NEDD8)).

The protein belongs to the cullin family. Component of a ubiquitin-protein ligase complex consisting of the cullin CUL3, the linker protein ELC1, the substrate receptor ELA1, and the RING protein HRT1. Neddylated; enhancing the ubiquitin-ligase activity.

It participates in protein modification; protein ubiquitination. Functionally, as part of the CRL3 E3 ubiquitin ligase complex; polyubiquitylates monoubiquitylated RNA polymerase II subunit RPO21 to trigger its proteolysis; plays a role in global genomic repair. The sequence is that of Cullin-3 (CUL3) from Saccharomyces cerevisiae (strain ATCC 204508 / S288c) (Baker's yeast).